Here is a 349-residue protein sequence, read N- to C-terminus: S-adenosylmethionine:tRNA ribosyltransferase-isomerase (349 aa).

The protein belongs to the QueA family. In terms of assembly, monomer.

The protein resides in the cytoplasm. The enzyme catalyses 7-aminomethyl-7-carbaguanosine(34) in tRNA + S-adenosyl-L-methionine = epoxyqueuosine(34) in tRNA + adenine + L-methionine + 2 H(+). The protein operates within tRNA modification; tRNA-queuosine biosynthesis. Its function is as follows. Transfers and isomerizes the ribose moiety from AdoMet to the 7-aminomethyl group of 7-deazaguanine (preQ1-tRNA) to give epoxyqueuosine (oQ-tRNA). The polypeptide is S-adenosylmethionine:tRNA ribosyltransferase-isomerase (Azotobacter vinelandii (strain DJ / ATCC BAA-1303)).